The sequence spans 257 residues: MKYQVKQVAEISGVSIRTLHHYDNIELLNPSALTDAGYRLYSDADLERLQQILFFKEIGFRLDEIKEMLDHPNFDRKAALQSQKEILMKKKQRMDEMIQTIDRTLLSVDGGETMNKRDLFAGLSMKDIEEHQQTYADEVRKLYGKEIAEETEKRTSAYSADDWRTIMAEFDSIYRRIAARMKHGPDDAEIQAAVGAFRDHICQYHYDCTLDIFRGLGEVYITDERFTDSINQYGEGLAAFLREAIIIYCDHQENPRP.

The 70-residue stretch at 2–71 (KYQVKQVAEI…LDEIKEMLDH (70 aa)) folds into the HTH merR-type domain. Positions 5-24 (VKQVAEISGVSIRTLHHYDN) form a DNA-binding region, H-T-H motif. The tract at residues 71 to 74 (HPNF) is hinge. Residues 76–104 (RKAALQSQKEILMKKKQRMDEMIQTIDRT) form an essential for dimerization region. A coiled-coil region spans residues 76-107 (RKAALQSQKEILMKKKQRMDEMIQTIDRTLLS).

Homodimer.

It is found in the cytoplasm. In terms of biological role, global transcriptional regulator that activates transcription of bmr and blt by binding directly to their promoter. Also stimulates the expression of the mta gene itself, ydfK and ymfE. This Bacillus subtilis (strain 168) protein is HTH-type transcriptional activator mta (mta).